Here is a 183-residue protein sequence, read N- to C-terminus: uncharacterized protein (183 aa).

Positions 1–23 are cleaved as a signal peptide; sequence MSAFKKSLLVAGVAMILSNNVFA. Cys41 and Cys80 form a disulfide bridge.

This sequence belongs to the fimbrial protein family.

The protein resides in the fimbrium. This is an uncharacterized protein from Escherichia coli (strain K12).